We begin with the raw amino-acid sequence, 335 residues long: Putative SWIB domain-containing protein R508 (335 aa).

A compositionally biased stretch (basic residues) spans 1–12; it reads MSKRVTSSKKSK. The segment at 1–182 is disordered; sequence MSKRVTSSKK…NKKSPKKLLN (182 aa). Positions 24-33 are enriched in low complexity; the sequence is KNLSKTSKSV. Over residues 60 to 75 the composition is skewed to polar residues; it reads NIGGSKSSRTYNSEGS. The span at 83 to 109 shows a compositional bias: basic and acidic residues; it reads SSKDSKVIKKNKQKVESSDSEKHSENK. Positions 110–126 are enriched in basic residues; that stretch reads SHKKSSKSSSISRKKPI. Positions 163–173 are enriched in basic and acidic residues; it reads KGEDNNDEKQN. The stretch at 181 to 217 forms a coiled coil; sequence LNEKKISSESFDDKLNELREELRENYIRQKKIMNDIK. The region spanning 244–326 is the SWIB/MDM2 domain; sequence GFNKPQTVPQ…QTWLKKVYNE (83 aa).

The sequence is that of Putative SWIB domain-containing protein R508 from Acanthamoeba polyphaga mimivirus (APMV).